Reading from the N-terminus, the 525-residue chain is GMP synthase [glutamine-hydrolyzing] (525 aa).

The region spanning 9–207 (RILILDFGSQ…VLQICQCEPL (199 aa)) is the Glutamine amidotransferase type-1 domain. Cys-86 functions as the Nucleophile in the catalytic mechanism. Active-site residues include His-181 and Glu-183. In terms of domain architecture, GMPS ATP-PPase spans 208–400 (WTPRNIIDQT…LGLPNAMLHR (193 aa)). 235-241 (SGGVDSA) serves as a coordination point for ATP.

Homodimer.

The catalysed reaction is XMP + L-glutamine + ATP + H2O = GMP + L-glutamate + AMP + diphosphate + 2 H(+). Its pathway is purine metabolism; GMP biosynthesis; GMP from XMP (L-Gln route): step 1/1. Catalyzes the synthesis of GMP from XMP. The polypeptide is GMP synthase [glutamine-hydrolyzing] (Hamiltonella defensa subsp. Acyrthosiphon pisum (strain 5AT)).